Reading from the N-terminus, the 541-residue chain is Glucose-6-phosphate isomerase (541 aa).

E353 (proton donor) is an active-site residue. Catalysis depends on residues H384 and K504.

The protein belongs to the GPI family.

It is found in the cytoplasm. The catalysed reaction is alpha-D-glucose 6-phosphate = beta-D-fructose 6-phosphate. Its pathway is carbohydrate biosynthesis; gluconeogenesis. It functions in the pathway carbohydrate degradation; glycolysis; D-glyceraldehyde 3-phosphate and glycerone phosphate from D-glucose: step 2/4. In terms of biological role, catalyzes the reversible isomerization of glucose-6-phosphate to fructose-6-phosphate. The sequence is that of Glucose-6-phosphate isomerase from Deinococcus radiodurans (strain ATCC 13939 / DSM 20539 / JCM 16871 / CCUG 27074 / LMG 4051 / NBRC 15346 / NCIMB 9279 / VKM B-1422 / R1).